The primary structure comprises 114 residues: Chaperone protein YscY (114 aa).

Binds to YscX.

The protein localises to the cytoplasm. Its function is as follows. Required for Yop secretion. Functions probably as a chaperone which stabilizes YscX within the cell, before its secretion. In Yersinia enterocolitica serotype O:8 / biotype 1B (strain NCTC 13174 / 8081), this protein is Chaperone protein YscY (yscY).